The chain runs to 95 residues: uncharacterized protein (95 aa).

This is an uncharacterized protein from Archaeoglobus fulgidus (strain ATCC 49558 / DSM 4304 / JCM 9628 / NBRC 100126 / VC-16).